The primary structure comprises 446 residues: Glutamate-1-semialdehyde 2,1-aminomutase (446 aa).

Lysine 263 carries the N6-(pyridoxal phosphate)lysine modification.

It belongs to the class-III pyridoxal-phosphate-dependent aminotransferase family. HemL subfamily. It depends on pyridoxal 5'-phosphate as a cofactor.

It localises to the cytoplasm. It carries out the reaction (S)-4-amino-5-oxopentanoate = 5-aminolevulinate. It functions in the pathway porphyrin-containing compound metabolism; protoporphyrin-IX biosynthesis; 5-aminolevulinate from L-glutamyl-tRNA(Glu): step 2/2. This Haloquadratum walsbyi (strain DSM 16790 / HBSQ001) protein is Glutamate-1-semialdehyde 2,1-aminomutase.